The sequence spans 209 residues: Uracil phosphoribosyltransferase (209 aa).

Residues arginine 79, arginine 104, and 131 to 139 each bind 5-phospho-alpha-D-ribose 1-diphosphate; that span reads DPMLATGAS. Residues isoleucine 194 and 199–201 each bind uracil; that span reads GDA. Aspartate 200 contacts 5-phospho-alpha-D-ribose 1-diphosphate.

It belongs to the UPRTase family. Requires Mg(2+) as cofactor.

It catalyses the reaction UMP + diphosphate = 5-phospho-alpha-D-ribose 1-diphosphate + uracil. It participates in pyrimidine metabolism; UMP biosynthesis via salvage pathway; UMP from uracil: step 1/1. Allosterically activated by GTP. In terms of biological role, catalyzes the conversion of uracil and 5-phospho-alpha-D-ribose 1-diphosphate (PRPP) to UMP and diphosphate. This is Uracil phosphoribosyltransferase from Staphylococcus haemolyticus (strain JCSC1435).